The primary structure comprises 310 residues: Coproporphyrin III ferrochelatase (310 aa).

Fe-coproporphyrin III is bound at residue Tyr-13. Tyr-13 is a binding site for N-methylmesoporphyrin. Position 20 (Glu-20) interacts with Mg(2+). Arg-30 serves as a coordination point for Fe-coproporphyrin III. 31 to 33 (RGR) is an N-methylmesoporphyrin binding site. Arg-46 contacts Mg(2+). Fe-coproporphyrin III-binding positions include 46–47 (RY), Ser-54, and Tyr-125. N-methylmesoporphyrin-binding residues include His-183 and Lys-188. His-183 contributes to the Fe(2+) binding site. Glu-264 serves as a coordination point for Fe(2+). Mg(2+) contacts are provided by Asp-268 and Glu-272.

This sequence belongs to the ferrochelatase family. Monomer. Interacts with frataxin/Fra.

The protein localises to the cytoplasm. The enzyme catalyses Fe-coproporphyrin III + 2 H(+) = coproporphyrin III + Fe(2+). It participates in porphyrin-containing compound metabolism; protoheme biosynthesis. Its activity is regulated as follows. Stimulated by Mg(2+). Inhibited by Cd(2+). Inhibited by N-methylmesoporphyrin (N-MeMP) and 2,4-disulfonic acid deuteroporphyrin IX (dSDP). Its function is as follows. Involved in coproporphyrin-dependent heme b biosynthesis. Catalyzes the insertion of ferrous iron into coproporphyrin III to form Fe-coproporphyrin III. It can also insert iron into protoporphyrin IX. Has weaker activity with 2,4 disulfonate, deuteroporphyrin and 2,4 hydroxyethyl. In vitro, can also use Zn(2+) or Cu(2+). This is Coproporphyrin III ferrochelatase from Bacillus subtilis (strain 168).